Consider the following 404-residue polypeptide: tRNA-specific 2-thiouridylase MnmA (404 aa).

Residues 42–49 (GLSGGVDS) and Leu-68 each bind ATP. Residue Cys-129 is the Nucleophile of the active site. Cys-129 and Cys-239 are oxidised to a cystine. Residue Gly-154 participates in ATP binding. Residues 189-191 (KDQ) form an interaction with tRNA region. Catalysis depends on Cys-239, which acts as the Cysteine persulfide intermediate. Positions 344–345 (RY) are interaction with tRNA.

This sequence belongs to the MnmA/TRMU family.

It is found in the cytoplasm. It carries out the reaction S-sulfanyl-L-cysteinyl-[protein] + uridine(34) in tRNA + AH2 + ATP = 2-thiouridine(34) in tRNA + L-cysteinyl-[protein] + A + AMP + diphosphate + H(+). In terms of biological role, catalyzes the 2-thiolation of uridine at the wobble position (U34) of tRNA, leading to the formation of s(2)U34. This chain is tRNA-specific 2-thiouridylase MnmA, found in Prochlorococcus marinus (strain NATL1A).